The following is an 89-amino-acid chain: Small ribosomal subunit protein bS20 (89 aa).

2 stretches are compositionally biased toward basic residues: residues 1–10 (MANIKSKIKS) and 17–29 (ARKRNSMIKSRVK). The segment at 1–29 (MANIKSKIKSIKTMEKARKRNSMIKSRVK) is disordered.

It belongs to the bacterial ribosomal protein bS20 family.

In terms of biological role, binds directly to 16S ribosomal RNA. The sequence is that of Small ribosomal subunit protein bS20 from Mycoplasmopsis pulmonis (strain UAB CTIP) (Mycoplasma pulmonis).